A 541-amino-acid chain; its full sequence is 2-hydroxyacylsphingosine 1-beta-galactosyltransferase (541 aa).

An N-terminal signal peptide occupies residues 1-20 (MKSYTPYFMLLWSAVGIARA). 3 N-linked (GlcNAc...) asparagine glycosylation sites follow: Asn-78, Asn-333, and Asn-442. A helical transmembrane segment spans residues 472–492 (YFLLDIAFVLLLGAVALYFIV).

It belongs to the UDP-glycosyltransferase family. Brain, restricted to the oligodendrocyte-containing cell layers of cerebrum and cerebellum.

It localises to the membrane. The protein localises to the endoplasmic reticulum. The enzyme catalyses an N-acylsphing-4-enine + UDP-alpha-D-galactose = a beta-D-galactosyl-(1&lt;-&gt;1')-N-acylsphing-4-enine + UDP + H(+). The catalysed reaction is N-(2-hydroxy-hexanoyl)-sphing-4-enine + UDP-alpha-D-galactose = N-(2-hydroxy-hexanoyl)-beta-D-galactosyl-sphing-4-enine + UDP + H(+). It carries out the reaction N-(2-hydroxy-hexanoyl)-sphinganine + UDP-alpha-D-galactose = N-(2-hydroxyhexanoyl)-beta-D-galactosylsphinganine + UDP + H(+). It catalyses the reaction an N-acyl-sphingoid base + UDP-alpha-D-galactose = a D-galactosylceramide + UDP + H(+). Its pathway is sphingolipid metabolism; galactosylceramide biosynthesis. In terms of biological role, catalyzes the transfer of galactose to ceramide, a key enzymatic step in the biosynthesis of galactocerebrosides, which are abundant sphingolipids of the myelin membrane of the central nervous system and peripheral nervous system. Galactosylates both hydroxy- and non-hydroxy fatty acid-containing ceramides and diglycerides. The chain is 2-hydroxyacylsphingosine 1-beta-galactosyltransferase from Rattus norvegicus (Rat).